A 227-amino-acid polypeptide reads, in one-letter code: Killer cell lectin-like receptor subfamily B member 1A (227 aa).

Residues 1-45 (MDTARVYFGLKPPRTPGAWHESPPSLPPDACRCPRSHRLALKLSC) are Cytoplasmic-facing. Residues 31–34 (CRCP) carry the LCK-binding motif motif. The chain crosses the membrane as a helical; Signal-anchor for type II membrane protein span at residues 46 to 66 (AGLILLVVTLIGMSVLVRVLI). Over 67–227 (QKPSIEKCYV…TLSNYVGYGH (161 aa)) the chain is Extracellular. One can recognise a C-type lectin domain in the interval 93–212 (ECPQDWLSHR…NSDNRWICQK (120 aa)). Intrachain disulfides connect cysteine 94–cysteine 105, cysteine 122–cysteine 210, and cysteine 189–cysteine 202.

Homodimer; disulfide-linked. Interacts with tyrosine kinase LCK. Expressed in natural killer cells.

The protein localises to the membrane. Its function is as follows. Plays a stimulatory role on natural killer (NK) cell cytotoxicity. The sequence is that of Killer cell lectin-like receptor subfamily B member 1A (Klrb1a) from Mus musculus (Mouse).